The sequence spans 79 residues: Cytochrome b (79 aa).

The next 3 membrane-spanning stretches (helical) occupy residues 1–7 (SALFLAM), 31–52 (WLIR…YLHI), and 67–79 (WNIG…LTMA). 2 residues coordinate heme b: His37 and His51.

The protein belongs to the cytochrome b family. As to quaternary structure, the cytochrome bc1 complex contains 11 subunits: 3 respiratory subunits (MT-CYB, CYC1 and UQCRFS1), 2 core proteins (UQCRC1 and UQCRC2) and 6 low-molecular weight proteins (UQCRH/QCR6, UQCRB/QCR7, UQCRQ/QCR8, UQCR10/QCR9, UQCR11/QCR10 and a cleavage product of UQCRFS1). This cytochrome bc1 complex then forms a dimer. Heme b serves as cofactor.

The protein localises to the mitochondrion inner membrane. In terms of biological role, component of the ubiquinol-cytochrome c reductase complex (complex III or cytochrome b-c1 complex) that is part of the mitochondrial respiratory chain. The b-c1 complex mediates electron transfer from ubiquinol to cytochrome c. Contributes to the generation of a proton gradient across the mitochondrial membrane that is then used for ATP synthesis. In Dipodomys californicus (California kangaroo rat), this protein is Cytochrome b (MT-CYB).